Consider the following 527-residue polypeptide: Homeobox protein NOBOX (527 aa).

Disordered regions lie at residues 1 to 126 (MEPT…DLKK), 194 to 245 (VEKL…DVFP), 271 to 306 (VTPP…RDVP), and 488 to 527 (ETGS…GAKE). Positions 136–195 (RKKTRTLYRSDQLEELERIFQEDHYPDSDKRHEISQMVGVTPQRIMVWFQNRRAKWRKVE) form a DNA-binding region, homeobox. The segment covering 194–203 (VEKLNEKETK) has biased composition (basic and acidic residues). A compositionally biased stretch (polar residues) spans 488 to 506 (ETGSSLSKMSDEQTSSSLE). Over residues 511–527 (EEVRDKNKNSHAAGAKE) the composition is skewed to basic and acidic residues.

As to expression, specifically expressed in ovaries and testes. In ovaries, expressed in oocytes from primordial through antral follicles but not in granulosa cells, theca cells and corpora lutea.

It is found in the nucleus. Transcription factor which plays an essential role in postnatal follicle development. Binds preferentially to the DNA sequences 5'-TAATTG-3', 5'-TAGTTG-3' and 5'-TAATTA-3'. Directly regulates the transcription of POU5F1 and GDF9 during early folliculogenesis. The protein is Homeobox protein NOBOX (Nobox) of Mus musculus (Mouse).